The sequence spans 449 residues: MDPTRGDSRYNLNYSMSSIGLSLADPADMYGNPALGAGRPPSGGLLQNMGGVPPMQRPNPAAGAPPAPQCQTLHSPQHASQQQQQQQQQQQQHQQQQQQQQQHPQQQRGLKRSGSDCYEDHHRSSGGLTLQGLDNVASGAVDDSVDNYNPLPNKKSPPANGKKTKGRVKIKMEYIDNKLRRYTTFSKRKTGIMKKAYELSTLTGTQVMLLVASETGHVYTFATRKLQPMITSEAGKQLIQTCLNSPDPPSVGGGDQRMSATGFEETELSYNIADEDSKDDRSPTSSGNESDDSSDVEMPAEAAEVATKLPASKTEVSAPPAASCSAATASSGHKTMPALNYQTDTNSGPSTSTAAGGGGSADSKYVYSAASIANIPQKMLRQLIQSGHLQVHAEEDGNQYVTIPLSSTAANLIKSNKLTASGSGASGSGTPVKNDASADKPLTIKQEFD.

Positions 23–166 (LADPADMYGN…PPANGKKTKG (144 aa)) are disordered. The segment covering 69–80 (QCQTLHSPQHAS) has biased composition (polar residues). Low complexity predominate over residues 81-107 (QQQQQQQQQQQQHQQQQQQQQQHPQQQ). Phosphoserine is present on Ser156. The MADS-box domain maps to 167–225 (RVKIKMEYIDNKLRRYTTFSKRKTGIMKKAYELSTLTGTQVMLLVASETGHVYTFATRK). Disordered regions lie at residues 270 to 360 (YNIA…GGGS) and 418 to 449 (LTAS…QEFD). Composition is skewed to low complexity over residues 317-331 (SAPP…TASS) and 345-354 (TNSGPSTSTA).

In terms of tissue distribution, after germ band retraction, high levels of zygotic expression are observed in a distinct subset of peripheral tracheal cells distributed throughout the embryo and low levels in somatic muscle. Expressed in the future intervein tissue of the wing imaginal disk from the third instar larvae until eclosion of the adult fly (at protein level).

The protein resides in the nucleus. Required for the formation of intervein tissue of the wing. Acts in a dosage-dependent manner to suppress wing vein formation and promote development of intervein cells. Might play a role in the proper formation and maintenance of the trachea. This Drosophila melanogaster (Fruit fly) protein is Serum response factor homolog (bs).